The primary structure comprises 96 residues: MSHGGKRRSGDGGSEGSSYSPLVYLKRPYFRKSRSCPLAQCPDEDIDYKNKVLLSKFVSEYGRILPSRITSVSARKQKLLARAIKRARYLALLPYC.

The interval 1-20 (MSHGGKRRSGDGGSEGSSYS) is disordered.

Belongs to the bacterial ribosomal protein bS18 family. In terms of assembly, part of the 30S ribosomal subunit. Forms a tight heterodimer with protein bS6.

In terms of biological role, binds as a heterodimer with protein bS6 to the central domain of the 16S rRNA, where it helps stabilize the platform of the 30S subunit. The protein is Small ribosomal subunit protein bS18 of Anaplasma phagocytophilum (strain HZ).